The primary structure comprises 157 residues: Increased recombination centers protein 23 (157 aa).

Residues 1–6 (MIEALE) are Cytoplasmic-facing. Residues 7-29 (IVLLLVIQSLQYICRTCIAFLLI) traverse the membrane as a helical segment. The Lumenal portion of the chain corresponds to 30-33 (PFLG). A helical membrane pass occupies residues 34 to 56 (LYAFDLFLYVYRMILYLSQMFNY). The Cytoplasmic portion of the chain corresponds to 57-157 (KRKLGRSKTN…EEGYYIAGSI (101 aa)).

The protein localises to the endoplasmic reticulum membrane. Is probably involved in a pathway contributing to genomic integrity. The sequence is that of Increased recombination centers protein 23 (IRC23) from Saccharomyces cerevisiae (strain ATCC 204508 / S288c) (Baker's yeast).